A 140-amino-acid chain; its full sequence is Ribosome-binding factor A (140 aa).

Positions 116 to 140 (RERQERGEIPPGSDDAQNCHDDEPS) are disordered.

The protein belongs to the RbfA family. In terms of assembly, monomer. Binds 30S ribosomal subunits, but not 50S ribosomal subunits or 70S ribosomes.

It localises to the cytoplasm. Functionally, one of several proteins that assist in the late maturation steps of the functional core of the 30S ribosomal subunit. Associates with free 30S ribosomal subunits (but not with 30S subunits that are part of 70S ribosomes or polysomes). Required for efficient processing of 16S rRNA. May interact with the 5'-terminal helix region of 16S rRNA. In Synechococcus sp. (strain WH7803), this protein is Ribosome-binding factor A.